A 429-amino-acid chain; its full sequence is Glutamate-1-semialdehyde 2,1-aminomutase 2 (429 aa).

K268 carries the N6-(pyridoxal phosphate)lysine modification.

It belongs to the class-III pyridoxal-phosphate-dependent aminotransferase family. HemL subfamily. Homodimer. Pyridoxal 5'-phosphate serves as cofactor.

Its subcellular location is the cytoplasm. It carries out the reaction (S)-4-amino-5-oxopentanoate = 5-aminolevulinate. Its pathway is porphyrin-containing compound metabolism; protoporphyrin-IX biosynthesis; 5-aminolevulinate from L-glutamyl-tRNA(Glu): step 2/2. The protein is Glutamate-1-semialdehyde 2,1-aminomutase 2 of Staphylococcus aureus (strain Mu50 / ATCC 700699).